A 152-amino-acid chain; its full sequence is Large ribosomal subunit protein bL9 (152 aa).

The protein belongs to the bacterial ribosomal protein bL9 family.

Binds to the 23S rRNA. In Synechococcus sp. (strain WH7803), this protein is Large ribosomal subunit protein bL9.